Consider the following 278-residue polypeptide: D-arabinitol 2-dehydrogenase [ribulose-forming] (278 aa).

NADP(+) contacts are provided by L28 and N49. The active-site Proton donor is the S166. NADP(+) is bound by residues Y181, K185, I214, and T216. Catalysis depends on Y181, which acts as the Proton acceptor. K185 serves as the catalytic Lowers pKa of active site Tyr.

Belongs to the short-chain dehydrogenases/reductases (SDR) family.

The enzyme catalyses D-arabinitol + NAD(+) = D-ribulose + NADH + H(+). It participates in carbohydrate metabolism; D-arabinitol metabolism. The protein is D-arabinitol 2-dehydrogenase [ribulose-forming] (ARDH) of Scheffersomyces stipitis (strain ATCC 58785 / CBS 6054 / NBRC 10063 / NRRL Y-11545) (Yeast).